The primary structure comprises 234 residues: Core atranone cluster (CAC) protein 1 (234 aa).

It functions in the pathway mycotoxin biosynthesis. Its function is as follows. Part of the core atranone cluster (CAC) which products are predicted to catalyze most or all steps of mycotoxin atranone synthesis, starting from geranylgeranyl pyrophosphate (GGPP). The initial cyclization of GGPP to dolabellane is probably performed by the terpene cyclase ATR13. The Baeyer-Villiger oxidation near the end of the atranone synthesis, which converts atranones D and E to atranones F and G is predicted to be catalyzed by the monooxygenase ATR8. Of the CAC's other predicted gene products, the reducing PKS ATR6 might synthesize a polyketide chain. This polyketide is probably transferred onto the atranone backbone by the polyketide transferase ATR5. Other predicted CAC products include 4 oxygenases (ATR2, ATR3, ATR4, and ATR14), 3 short-chain reductases (ATR7, ATR9, and ATR10), and a methyltransferase (ATR12). These may all be involved in the various steps of atranone biosynthesis, although their specific roles must await experimental determination. The sequence is that of Core atranone cluster (CAC) protein 1 from Stachybotrys chlorohalonatus (strain IBT 40285).